A 109-amino-acid chain; its full sequence is Mitochondrial pyruvate carrier 2 (109 aa).

The next 3 helical transmembrane spans lie at 19–35 (IHFW…IANI), 51–67 (IAVT…STII), and 74–90 (LFSV…YQLT).

This sequence belongs to the mitochondrial pyruvate carrier (MPC) (TC 2.A.105) family.

Its subcellular location is the mitochondrion inner membrane. Functionally, mediates the uptake of pyruvate into mitochondria. In Arabidopsis thaliana (Mouse-ear cress), this protein is Mitochondrial pyruvate carrier 2.